A 503-amino-acid polypeptide reads, in one-letter code: D-alanine--D-alanyl carrier protein ligase (503 aa).

151–152 (TS) provides a ligand contact to ATP. A D-alanine-binding site is contributed by Asp196. 291-296 (NTYGPT) serves as a coordination point for ATP. Val300 lines the D-alanine pocket. ATP is bound by residues Asp382 and Lys491. Lys491 contributes to the D-alanine binding site.

The protein belongs to the ATP-dependent AMP-binding enzyme family. DltA subfamily.

It localises to the cytoplasm. It catalyses the reaction holo-[D-alanyl-carrier protein] + D-alanine + ATP = D-alanyl-[D-alanyl-carrier protein] + AMP + diphosphate. It participates in cell wall biogenesis; lipoteichoic acid biosynthesis. In terms of biological role, catalyzes the first step in the D-alanylation of lipoteichoic acid (LTA), the activation of D-alanine and its transfer onto the D-alanyl carrier protein (Dcp) DltC. In an ATP-dependent two-step reaction, forms a high energy D-alanyl-AMP intermediate, followed by transfer of the D-alanyl residue as a thiol ester to the phosphopantheinyl prosthetic group of the Dcp. D-alanylation of LTA plays an important role in modulating the properties of the cell wall in Gram-positive bacteria, influencing the net charge of the cell wall. The chain is D-alanine--D-alanyl carrier protein ligase from Bacillus velezensis (strain DSM 23117 / BGSC 10A6 / LMG 26770 / FZB42) (Bacillus amyloliquefaciens subsp. plantarum).